Consider the following 1275-residue polypeptide: Streptococcal hemoprotein receptor (1275 aa).

Residues 1–26 (MKKISKCAFVAISALVLIQATQTVKS) form the signal peptide. Residues 61 to 123 (GKEYYKHIEK…KKDGDILITF (63 aa)) form an HID 1 region. Residues Thr87, Arg196, Tyr197, and Met238 each contribute to the heme site. The HID 2 stretch occupies residues 203 to 269 (IKALTQQITK…KGFEDVTITV (67 aa)). The NEAT 1 domain occupies 369 to 501 (LTEGTYTLNF…DMTFSKTVTK (133 aa)). LRR repeat units follow at residues 544–567 (LEQI…LKHA), 568–590 (KNIT…LFSQ), 592–614 (KQLR…TFKS), 616–638 (AQLR…LFQS), 639–662 (LHHL…PFEG), 664–686 (SRLT…ALEP), 687–710 (LTSL…IEKL), 712–733 (ALST…SFKN), 734–757 (LPKL…IFKQ), 759–781 (NQLT…VFPD), and 783–804 (ETLN…VRAL). In terms of domain architecture, NEAT 2 spans 976-1138 (LRDGIYYLNA…TTEKAKVVKE (163 aa)). 3 disordered regions span residues 1137–1174 (KETN…SAAT), 1186–1205 (KATG…DKAE), and 1210–1248 (LVRD…ESSS). Over residues 1138 to 1166 (ETNNPQENSHLTSTDQLKGPQNRQQEKTP) the composition is skewed to polar residues. Composition is skewed to basic and acidic residues over residues 1196–1205 (SKTDDTDKAE) and 1210–1229 (LVRD…TKTK). Residues 1250 to 1269 (YHLIAGLSSFMIVALGFIIG) traverse the membrane as a helical segment.

It is found in the cell membrane. Its activity is regulated as follows. May modulate heme uptake according to heme availability. In the presence of high heme concentrations, NEAT 1 facilitates fast heme delivery to Shp, whereas NEAT 2 serves as a temporary storage for heme on the bacterial surface. When heme availability is limiting, heme from NEAT 2 is transferred back to NEAT 1 and from there to Shp. Hemoprotein receptor that plays a central role in the acquisition of host heme, a source of iron during bacterial infection, and is therefore an important virulence factor. Captures host hemoproteins and their iron-containing heme molecules, and transfers the heme to the cell surface heme-binding protein Shp. Plays a pivotal role in iron acquisition and growth under iron-starvation conditions. Uses a cap and release mechanism in which Shr forms a dynamic complex with hemoglobin that enables the gated release of its most labile heme molecule. This mechanism exploits the hemoglobin beta subunit's inherent weaker affinity for heme, allowing S.pyogenes to preferentially capture only heme-saturated forms of hemoglobin that contain iron. In vitro, binds directly to a variety of heme-containing proteins, including hemoglobin, myoglobin, heme albumin and the hemoglobin-haptoglobin complex. It also binds to and acquires heme from methemoglobin, the ferric form of hemoglobin, which is likely to be a physiologically relevant heme source for the hemolytic group A streptococcus (GAS). Seems to have an inherent ability to reduce the ferric heme present in methemoglobin to ferrous heme and to provide a stable environment for the produced ferrous complex. Does not bind apohemoglobin, apohaptoglobin, fibrinogen or streptavidin, indicating that it specifically recognizes hemoproteins. Functionally, in addition to its role in heme acquisition, functions as an adhesin, contributing to host cell adhesion and hence virulence. Specifically binds to extracellular matrix (ECM) components, including fibronectin and laminin, and mediates bacterial attachment to host epithelial cells. In Streptococcus pyogenes serotype M1, this protein is Streptococcal hemoprotein receptor.